A 396-amino-acid polypeptide reads, in one-letter code: Flavohemoprotein (396 aa).

In terms of domain architecture, Globin spans 1-136 (MLDAQTIATV…LANVFIHREA (136 aa)). His-85 is a binding site for heme b. Residues Tyr-95 and Glu-135 each act as charge relay system in the active site. Residues 147–396 (GGWEGTRPFR…YECFGPHKVL (250 aa)) form a reductase region. One can recognise an FAD-binding FR-type domain in the interval 150 to 255 (EGTRPFRIVA…AAPAGDFFMN (106 aa)). Residues Tyr-188 and 204-207 (RQYS) contribute to the FAD site. 268–273 (GVGQTP) is an NADP(+) binding site. 389–392 (CFGP) serves as a coordination point for FAD.

This sequence belongs to the globin family. Two-domain flavohemoproteins subfamily. It in the C-terminal section; belongs to the flavoprotein pyridine nucleotide cytochrome reductase family. Requires heme b as cofactor. It depends on FAD as a cofactor.

The enzyme catalyses 2 nitric oxide + NADPH + 2 O2 = 2 nitrate + NADP(+) + H(+). It catalyses the reaction 2 nitric oxide + NADH + 2 O2 = 2 nitrate + NAD(+) + H(+). Is involved in NO detoxification in an aerobic process, termed nitric oxide dioxygenase (NOD) reaction that utilizes O(2) and NAD(P)H to convert NO to nitrate, which protects the bacterium from various noxious nitrogen compounds. Therefore, plays a central role in the inducible response to nitrosative stress. The chain is Flavohemoprotein from Salmonella typhi.